A 216-amino-acid polypeptide reads, in one-letter code: Probable transaldolase (216 aa).

K83 acts as the Schiff-base intermediate with substrate in catalysis.

Belongs to the transaldolase family. Type 3B subfamily.

It is found in the cytoplasm. It carries out the reaction D-sedoheptulose 7-phosphate + D-glyceraldehyde 3-phosphate = D-erythrose 4-phosphate + beta-D-fructose 6-phosphate. It participates in carbohydrate degradation; pentose phosphate pathway; D-glyceraldehyde 3-phosphate and beta-D-fructose 6-phosphate from D-ribose 5-phosphate and D-xylulose 5-phosphate (non-oxidative stage): step 2/3. Transaldolase is important for the balance of metabolites in the pentose-phosphate pathway. This Methanococcus aeolicus (strain ATCC BAA-1280 / DSM 17508 / OCM 812 / Nankai-3) protein is Probable transaldolase.